A 230-amino-acid polypeptide reads, in one-letter code: Large ribosomal subunit protein uL1 (230 aa).

Belongs to the universal ribosomal protein uL1 family. As to quaternary structure, part of the 50S ribosomal subunit.

Its function is as follows. Binds directly to 23S rRNA. The L1 stalk is quite mobile in the ribosome, and is involved in E site tRNA release. Functionally, protein L1 is also a translational repressor protein, it controls the translation of the L11 operon by binding to its mRNA. The chain is Large ribosomal subunit protein uL1 from Ligilactobacillus salivarius (strain UCC118) (Lactobacillus salivarius).